The primary structure comprises 377 residues: Bifunctional enzyme IspD/IspF (377 aa).

Residues 1–221 (MTTAAIIVAA…ERILRQDMDV (221 aa)) are 2-C-methyl-D-erythritol 4-phosphate cytidylyltransferase. Residues 222 to 377 (RLGNGYDVHR…ALATACLVKP (156 aa)) form a 2-C-methyl-D-erythritol 2,4-cyclodiphosphate synthase region. A divalent metal cation-binding residues include Asp228 and His230. 4-CDP-2-C-methyl-D-erythritol 2-phosphate is bound by residues 228–230 (DVH) and 254–255 (HS). His262 is a binding site for a divalent metal cation. Residues 276-278 (DIG), 352-355 (TTSE), Phe359, and Arg362 each bind 4-CDP-2-C-methyl-D-erythritol 2-phosphate.

It in the N-terminal section; belongs to the IspD/TarI cytidylyltransferase family. IspD subfamily. The protein in the C-terminal section; belongs to the IspF family. A divalent metal cation serves as cofactor.

It catalyses the reaction 2-C-methyl-D-erythritol 4-phosphate + CTP + H(+) = 4-CDP-2-C-methyl-D-erythritol + diphosphate. The catalysed reaction is 4-CDP-2-C-methyl-D-erythritol 2-phosphate = 2-C-methyl-D-erythritol 2,4-cyclic diphosphate + CMP. It participates in isoprenoid biosynthesis; isopentenyl diphosphate biosynthesis via DXP pathway; isopentenyl diphosphate from 1-deoxy-D-xylulose 5-phosphate: step 2/6. The protein operates within isoprenoid biosynthesis; isopentenyl diphosphate biosynthesis via DXP pathway; isopentenyl diphosphate from 1-deoxy-D-xylulose 5-phosphate: step 4/6. Bifunctional enzyme that catalyzes the formation of 4-diphosphocytidyl-2-C-methyl-D-erythritol from CTP and 2-C-methyl-D-erythritol 4-phosphate (MEP) (IspD), and catalyzes the conversion of 4-diphosphocytidyl-2-C-methyl-D-erythritol 2-phosphate (CDP-ME2P) to 2-C-methyl-D-erythritol 2,4-cyclodiphosphate (ME-CPP) with a corresponding release of cytidine 5-monophosphate (CMP) (IspF). In Ruegeria pomeroyi (strain ATCC 700808 / DSM 15171 / DSS-3) (Silicibacter pomeroyi), this protein is Bifunctional enzyme IspD/IspF.